The sequence spans 328 residues: Malate dehydrogenase (328 aa).

Residue 11-17 (GAAGQIG) participates in NAD(+) binding. 2 residues coordinate substrate: Arg-94 and Arg-100. NAD(+) contacts are provided by residues Asn-107, Gln-114, and 131–133 (VGN). Asn-133 and Arg-164 together coordinate substrate. The active-site Proton acceptor is the His-189.

This sequence belongs to the LDH/MDH superfamily. MDH type 2 family.

It carries out the reaction (S)-malate + NAD(+) = oxaloacetate + NADH + H(+). Functionally, catalyzes the reversible oxidation of malate to oxaloacetate. The polypeptide is Malate dehydrogenase (Xylella fastidiosa (strain M12)).